The sequence spans 244 residues: Probable transcriptional regulatory protein CHAB381_1426 (244 aa).

It belongs to the TACO1 family.

It localises to the cytoplasm. The polypeptide is Probable transcriptional regulatory protein CHAB381_1426 (Campylobacter hominis (strain ATCC BAA-381 / DSM 21671 / CCUG 45161 / LMG 19568 / NCTC 13146 / CH001A)).